The primary structure comprises 67 residues: Neurotoxin Cex9 (67 aa).

Residues 1–65 (KDGYPVEVTG…TWPLPNKSCG (65 aa)) enclose the LCN-type CS-alpha/beta domain. Disulfide bonds link Cys11–Cys64, Cys15–Cys40, Cys24–Cys45, and Cys28–Cys47. Cys64 bears the Cysteine amide mark. Positions 65-67 (GKK) are excised as a propeptide.

This sequence belongs to the long (4 C-C) scorpion toxin superfamily. Sodium channel inhibitor family. Beta subfamily. In terms of tissue distribution, expressed by the venom gland.

The protein localises to the secreted. Its function is as follows. Beta toxins bind voltage-independently at site-4 of sodium channels (Nav) and shift the voltage of activation toward more negative potentials thereby affecting sodium channel activation and promoting spontaneous and repetitive firing. This Centruroides exilicauda (Bark scorpion) protein is Neurotoxin Cex9.